The sequence spans 177 residues: Large ribosomal subunit protein uL6 (177 aa).

Belongs to the universal ribosomal protein uL6 family. Part of the 50S ribosomal subunit.

Its function is as follows. This protein binds to the 23S rRNA, and is important in its secondary structure. It is located near the subunit interface in the base of the L7/L12 stalk, and near the tRNA binding site of the peptidyltransferase center. This chain is Large ribosomal subunit protein uL6, found in Paramagnetospirillum magneticum (strain ATCC 700264 / AMB-1) (Magnetospirillum magneticum).